We begin with the raw amino-acid sequence, 185 residues long: Crossover junction endodeoxyribonuclease RuvC (185 aa).

Active-site residues include aspartate 7, glutamate 66, and aspartate 137. Mg(2+) is bound by residues aspartate 7, glutamate 66, and aspartate 137.

This sequence belongs to the RuvC family. As to quaternary structure, homodimer which binds Holliday junction (HJ) DNA. The HJ becomes 2-fold symmetrical on binding to RuvC with unstacked arms; it has a different conformation from HJ DNA in complex with RuvA. In the full resolvosome a probable DNA-RuvA(4)-RuvB(12)-RuvC(2) complex forms which resolves the HJ. The cofactor is Mg(2+).

The protein localises to the cytoplasm. It carries out the reaction Endonucleolytic cleavage at a junction such as a reciprocal single-stranded crossover between two homologous DNA duplexes (Holliday junction).. Its function is as follows. The RuvA-RuvB-RuvC complex processes Holliday junction (HJ) DNA during genetic recombination and DNA repair. Endonuclease that resolves HJ intermediates. Cleaves cruciform DNA by making single-stranded nicks across the HJ at symmetrical positions within the homologous arms, yielding a 5'-phosphate and a 3'-hydroxyl group; requires a central core of homology in the junction. The consensus cleavage sequence is 5'-(A/T)TT(C/G)-3'. Cleavage occurs on the 3'-side of the TT dinucleotide at the point of strand exchange. HJ branch migration catalyzed by RuvA-RuvB allows RuvC to scan DNA until it finds its consensus sequence, where it cleaves and resolves the cruciform DNA. This Anaeromyxobacter dehalogenans (strain 2CP-1 / ATCC BAA-258) protein is Crossover junction endodeoxyribonuclease RuvC.